The chain runs to 202 residues: MDKFVKLTGVAAPLPVVNVDTDMIIPKDYLKTIKRTGLGTGLFAEARYNEDGSENPDFVLNKPAYRDAKILVAGDNFGCGSSREHAPWALLDFGIRCVISTSFADIFYNNCFKNGILPIKVSQEDLDKLMDDASRGSNAILTVDLENLEITGPDGGLIKFDLDEFKRHCLLNGLDDIGLTLEKGKAIDSFEKKNAASHPWAA.

This sequence belongs to the LeuD family. LeuD type 1 subfamily. In terms of assembly, heterodimer of LeuC and LeuD.

It carries out the reaction (2R,3S)-3-isopropylmalate = (2S)-2-isopropylmalate. Its pathway is amino-acid biosynthesis; L-leucine biosynthesis; L-leucine from 3-methyl-2-oxobutanoate: step 2/4. In terms of biological role, catalyzes the isomerization between 2-isopropylmalate and 3-isopropylmalate, via the formation of 2-isopropylmaleate. The protein is 3-isopropylmalate dehydratase small subunit of Rhizobium johnstonii (strain DSM 114642 / LMG 32736 / 3841) (Rhizobium leguminosarum bv. viciae).